The sequence spans 686 residues: DNA ligase (686 aa).

NAD(+)-binding positions include 31–35 (DSEYD), 80–81 (SL), and Glu109. Catalysis depends on Lys111, which acts as the N6-AMP-lysine intermediate. NAD(+)-binding residues include Arg132, Glu166, Lys280, and Lys304. The Zn(2+) site is built by Cys430, Cys433, Cys448, and Cys453. Residues 611-686 (NVEGILSGKT…IWSEQDLLDL (76 aa)) form the BRCT domain.

Belongs to the NAD-dependent DNA ligase family. LigA subfamily. It depends on Mg(2+) as a cofactor. Mn(2+) serves as cofactor.

The catalysed reaction is NAD(+) + (deoxyribonucleotide)n-3'-hydroxyl + 5'-phospho-(deoxyribonucleotide)m = (deoxyribonucleotide)n+m + AMP + beta-nicotinamide D-nucleotide.. DNA ligase that catalyzes the formation of phosphodiester linkages between 5'-phosphoryl and 3'-hydroxyl groups in double-stranded DNA using NAD as a coenzyme and as the energy source for the reaction. It is essential for DNA replication and repair of damaged DNA. This Lactococcus lactis subsp. cremoris (strain SK11) protein is DNA ligase.